Reading from the N-terminus, the 264-residue chain is Ribosomal RNA small subunit methyltransferase J (264 aa).

Residues 111–112, 127–128, and Asp-180 contribute to the S-adenosyl-L-methionine site; these read RD and ER.

It belongs to the methyltransferase superfamily. RsmJ family.

Its subcellular location is the cytoplasm. The catalysed reaction is guanosine(1516) in 16S rRNA + S-adenosyl-L-methionine = N(2)-methylguanosine(1516) in 16S rRNA + S-adenosyl-L-homocysteine + H(+). Specifically methylates the guanosine in position 1516 of 16S rRNA. The sequence is that of Ribosomal RNA small subunit methyltransferase J from Alkalilimnicola ehrlichii (strain ATCC BAA-1101 / DSM 17681 / MLHE-1).